Reading from the N-terminus, the 142-residue chain is RNA-directed DNA polymerase homolog (142 aa).

Its subcellular location is the mitochondrion. It catalyses the reaction RNA(n) + a ribonucleoside 5'-triphosphate = RNA(n+1) + diphosphate. In Oenothera berteroana (Bertero's evening primrose), this protein is RNA-directed DNA polymerase homolog.